Here is a 389-residue protein sequence, read N- to C-terminus: UDP-N-acetylglucosamine--N-acetylmuramyl-(pentapeptide) pyrophosphoryl-undecaprenol N-acetylglucosamine transferase (389 aa).

UDP-N-acetyl-alpha-D-glucosamine contacts are provided by residues 17–19 (TAG), asparagine 137, arginine 179, serine 213, and glutamine 308.

It belongs to the glycosyltransferase 28 family. MurG subfamily.

It localises to the cell membrane. The catalysed reaction is di-trans,octa-cis-undecaprenyl diphospho-N-acetyl-alpha-D-muramoyl-L-alanyl-D-glutamyl-meso-2,6-diaminopimeloyl-D-alanyl-D-alanine + UDP-N-acetyl-alpha-D-glucosamine = di-trans,octa-cis-undecaprenyl diphospho-[N-acetyl-alpha-D-glucosaminyl-(1-&gt;4)]-N-acetyl-alpha-D-muramoyl-L-alanyl-D-glutamyl-meso-2,6-diaminopimeloyl-D-alanyl-D-alanine + UDP + H(+). The protein operates within cell wall biogenesis; peptidoglycan biosynthesis. Its function is as follows. Cell wall formation. Catalyzes the transfer of a GlcNAc subunit on undecaprenyl-pyrophosphoryl-MurNAc-pentapeptide (lipid intermediate I) to form undecaprenyl-pyrophosphoryl-MurNAc-(pentapeptide)GlcNAc (lipid intermediate II). This chain is UDP-N-acetylglucosamine--N-acetylmuramyl-(pentapeptide) pyrophosphoryl-undecaprenol N-acetylglucosamine transferase, found in Rhodococcus erythropolis (strain PR4 / NBRC 100887).